We begin with the raw amino-acid sequence, 348 residues long: Phenylalanine--tRNA ligase alpha subunit (348 aa).

A Mg(2+)-binding site is contributed by E268.

It belongs to the class-II aminoacyl-tRNA synthetase family. Phe-tRNA synthetase alpha subunit type 1 subfamily. Tetramer of two alpha and two beta subunits. Requires Mg(2+) as cofactor.

It localises to the cytoplasm. The catalysed reaction is tRNA(Phe) + L-phenylalanine + ATP = L-phenylalanyl-tRNA(Phe) + AMP + diphosphate + H(+). The protein is Phenylalanine--tRNA ligase alpha subunit of Bordetella parapertussis (strain 12822 / ATCC BAA-587 / NCTC 13253).